Reading from the N-terminus, the 116-residue chain is uncharacterized protein (116 aa).

Residues 1–21 (MAPSTAMLIMGLLKLPRLRLA) form the signal peptide.

This is an uncharacterized protein from Saccharomyces cerevisiae (strain ATCC 204508 / S288c) (Baker's yeast).